Consider the following 217-residue polypeptide: MSKGRAEAAAGAAGILLRYLQEQNRPYSSQDVFGNLQREHGLGKAVVVKTLEQLAQQGKIKEKMYGKQKIYFADQDQFDMVSDADLQVLDGKIVALTAKVQSLQQSCRYMEAELKELSSALTTPEMQKEIQELKKECAGYRERLKNIKAATNHVTPEEKEQVYRERQKYCKEWRKRKRMATELSDAILEGYPKSKKQFFEEVGIETDEDYNVTLPDP.

A coiled-coil region spans residues 93–153 (IVALTAKVQS…LKNIKAATNH (61 aa)). The interval 118 to 182 (SSALTTPEMQ…WRKRKRMATE (65 aa)) is DNA-binding.

The protein belongs to the HOP2 family. As to quaternary structure, interacts with the DNA-binding domain of the nuclear receptors NR3C1/GR, ESR2/ER-beta, THRB and RXRA. Forms a stable heterodimer with MND1. Interacts with PSMC3/TBP1. Post-translationally, PTM: Phosphorylated by PKA, PKC and MAPK. Highly expressed in testis and colon.

The protein localises to the nucleus. Plays an important role in meiotic recombination. Stimulates DMC1-mediated strand exchange required for pairing homologous chromosomes during meiosis. The complex PSMC3IP/MND1 binds DNA, stimulates the recombinase activity of DMC1 as well as DMC1 D-loop formation from double-strand DNA. This complex stabilizes presynaptic RAD51 and DMC1 filaments formed on single strand DNA to capture double-strand DNA. This complex stimulates both synaptic and presynaptic critical steps in RAD51 and DMC1-promoted homologous pairing. May inhibit HIV-1 viral protein TAT activity and modulate the activity of proteasomes through association with PSMC3. Acts as a tissue specific coactivator of hormone-dependent transcription mediated by nuclear receptors. This chain is Homologous-pairing protein 2 homolog (PSMC3IP), found in Homo sapiens (Human).